The sequence spans 183 residues: Acyl-homoserine-lactone synthase (183 aa).

This sequence belongs to the autoinducer synthase family.

The catalysed reaction is a fatty acyl-[ACP] + S-adenosyl-L-methionine = an N-acyl-L-homoserine lactone + S-methyl-5'-thioadenosine + holo-[ACP] + H(+). Involved in the synthesis of the acyl-homoserine lactone (AHL) signal N-(3-hydroxydodecanoyl)-L-HSL (3-hydroxy-C(12)-HSL or OH-dDHL). Probably part of a quorum-sensing system with AnoR. The sequence is that of Acyl-homoserine-lactone synthase from Acinetobacter nosocomialis.